Reading from the N-terminus, the 400-residue chain is Subtilisin-like protease 11 (400 aa).

A signal peptide spans 1 to 19 (MGLFTVVFTAIAALSAVDA). The propeptide occupies 20 to 117 (AELLRSPNSK…VEHDRYVYID (98 aa)). The region spanning 35–116 (SYLVVMKDSV…FVEHDRYVYI (82 aa)) is the Inhibitor I9 domain. The region spanning 127 to 400 (SWGLGRVSHR…NKLLYNGSGQ (274 aa)) is the Peptidase S8 domain. N-linked (GlcNAc...) asparagine glycosylation is present at N138. Active-site charge relay system residues include D159 and H191. 3 N-linked (GlcNAc...) asparagine glycosylation sites follow: N252, N336, and N337. S346 serves as the catalytic Charge relay system. N388 and N396 each carry an N-linked (GlcNAc...) asparagine glycan.

Belongs to the peptidase S8 family.

The protein localises to the secreted. Secreted subtilisin-like serine protease with keratinolytic activity that contributes to pathogenicity. The sequence is that of Subtilisin-like protease 11 (SUB11) from Arthroderma gypseum (strain ATCC MYA-4604 / CBS 118893) (Microsporum gypseum).